Here is a 478-residue protein sequence, read N- to C-terminus: Transposase for insertion sequence element IS231E (478 aa).

It belongs to the transposase 11 family.

Involved in the transposition of the insertion sequence. The polypeptide is Transposase for insertion sequence element IS231E (Bacillus thuringiensis subsp. finitimus).